The sequence spans 139 residues: uncharacterized protein (139 aa).

To E.coli YecT.

This is an uncharacterized protein from Rhizobium meliloti (strain 1021) (Ensifer meliloti).